Consider the following 498-residue polypeptide: Glutamyl-tRNA(Gln) amidotransferase subunit A (498 aa).

Active-site charge relay system residues include Lys-80 and Ser-155. The disordered stretch occupies residues 132–159 (SSTENSAYGPTRNPWDTDRVPGGSSGGS). Ser-179 acts as the Acyl-ester intermediate in catalysis.

This sequence belongs to the amidase family. GatA subfamily. Heterotrimer of A, B and C subunits.

The enzyme catalyses L-glutamyl-tRNA(Gln) + L-glutamine + ATP + H2O = L-glutaminyl-tRNA(Gln) + L-glutamate + ADP + phosphate + H(+). Allows the formation of correctly charged Gln-tRNA(Gln) through the transamidation of misacylated Glu-tRNA(Gln) in organisms which lack glutaminyl-tRNA synthetase. The reaction takes place in the presence of glutamine and ATP through an activated gamma-phospho-Glu-tRNA(Gln). The protein is Glutamyl-tRNA(Gln) amidotransferase subunit A of Thermobifida fusca (strain YX).